Consider the following 364-residue polypeptide: DNA replication and repair protein RecF (364 aa).

Gly-30 to Thr-37 contributes to the ATP binding site.

This sequence belongs to the RecF family.

The protein resides in the cytoplasm. The RecF protein is involved in DNA metabolism; it is required for DNA replication and normal SOS inducibility. RecF binds preferentially to single-stranded, linear DNA. It also seems to bind ATP. This is DNA replication and repair protein RecF from Sodalis glossinidius.